The following is a 415-amino-acid chain: Phosphopentomutase (415 aa).

Residues aspartate 10, aspartate 313, histidine 318, aspartate 354, histidine 355, and histidine 366 each coordinate Mn(2+).

The protein belongs to the phosphopentomutase family. Mn(2+) is required as a cofactor.

Its subcellular location is the cytoplasm. The catalysed reaction is 2-deoxy-alpha-D-ribose 1-phosphate = 2-deoxy-D-ribose 5-phosphate. It carries out the reaction alpha-D-ribose 1-phosphate = D-ribose 5-phosphate. It functions in the pathway carbohydrate degradation; 2-deoxy-D-ribose 1-phosphate degradation; D-glyceraldehyde 3-phosphate and acetaldehyde from 2-deoxy-alpha-D-ribose 1-phosphate: step 1/2. Its function is as follows. Isomerase that catalyzes the conversion of deoxy-ribose 1-phosphate (dRib-1-P) and ribose 1-phosphate (Rib-1-P) to deoxy-ribose 5-phosphate (dRib-5-P) and ribose 5-phosphate (Rib-5-P), respectively. In Psychromonas ingrahamii (strain DSM 17664 / CCUG 51855 / 37), this protein is Phosphopentomutase.